The following is a 438-amino-acid chain: Adenosylhomocysteinase (438 aa).

3 residues coordinate substrate: Thr64, Asp139, and Glu164. 165-167 (TTT) lines the NAD(+) pocket. 2 residues coordinate substrate: Lys194 and Asp198. NAD(+)-binding positions include Asn199, 228–233 (GYGDVG), Glu251, Asn286, 307–309 (IGH), and Asn352.

Belongs to the adenosylhomocysteinase family. The cofactor is NAD(+).

The protein localises to the cytoplasm. The catalysed reaction is S-adenosyl-L-homocysteine + H2O = L-homocysteine + adenosine. It participates in amino-acid biosynthesis; L-homocysteine biosynthesis; L-homocysteine from S-adenosyl-L-homocysteine: step 1/1. May play a key role in the regulation of the intracellular concentration of adenosylhomocysteine. The sequence is that of Adenosylhomocysteinase from Coxiella burnetii (strain CbuK_Q154) (Coxiella burnetii (strain Q154)).